Reading from the N-terminus, the 421-residue chain is Serine hydroxymethyltransferase (421 aa).

(6S)-5,6,7,8-tetrahydrofolate-binding positions include Leu-121 and 125-127 (GHL). Residue Lys-230 is modified to N6-(pyridoxal phosphate)lysine. (6S)-5,6,7,8-tetrahydrofolate is bound at residue 355–357 (SPF).

It belongs to the SHMT family. As to quaternary structure, homodimer. The cofactor is pyridoxal 5'-phosphate.

It is found in the cytoplasm. It carries out the reaction (6R)-5,10-methylene-5,6,7,8-tetrahydrofolate + glycine + H2O = (6S)-5,6,7,8-tetrahydrofolate + L-serine. It participates in one-carbon metabolism; tetrahydrofolate interconversion. The protein operates within amino-acid biosynthesis; glycine biosynthesis; glycine from L-serine: step 1/1. In terms of biological role, catalyzes the reversible interconversion of serine and glycine with tetrahydrofolate (THF) serving as the one-carbon carrier. This reaction serves as the major source of one-carbon groups required for the biosynthesis of purines, thymidylate, methionine, and other important biomolecules. Also exhibits THF-independent aldolase activity toward beta-hydroxyamino acids, producing glycine and aldehydes, via a retro-aldol mechanism. This is Serine hydroxymethyltransferase from Cellvibrio japonicus (strain Ueda107) (Pseudomonas fluorescens subsp. cellulosa).